The chain runs to 1069 residues: Rab GTPase-activating protein 1 (1069 aa).

The segment at 1-79 is disordered; the sequence is MDDKASVGKI…DPPMDDQPGE (79 aa). A compositionally biased stretch (low complexity) spans 7 to 22; it reads VGKISVSSDSVSTLNS. Position 42 is a phosphoserine (serine 42). The region spanning 142–298 is the PID domain; the sequence is EDSVVFSKLT…IFTFSVSLEI (157 aa). At serine 360 the chain carries Phosphoserine. Residues 482 to 527 form a disordered region; that stretch reads ERERRKTTASPSVRLPQSGSQSSVIPSPPEDDEEEDNDEPLLSGSG. The segment covering 489–506 has biased composition (polar residues); that stretch reads TASPSVRLPQSGSQSSVI. Positions 510 to 520 are enriched in acidic residues; that stretch reads PEDDEEEDNDE. A Rab-GAP TBC domain is found at 566-752; it reads GVPEALRGEV…HIIDLLLCEG (187 aa). The stretch at 798–1047 forms a coiled coil; the sequence is KKLMELACNM…ALNEVQAAKK (250 aa). Threonine 996 is subject to Phosphothreonine.

Interacts with RAB6A and tubulin gamma.

It localises to the cytoplasm. The protein resides in the cytosol. Its subcellular location is the cytoskeleton. The protein localises to the microtubule organizing center. It is found in the centrosome. In terms of biological role, may act as a GTPase-activating protein of RAB6A. May play a role in microtubule nucleation by centrosome. May participate in a RAB6A-mediated pathway involved in the metaphase-anaphase transition. In Pongo abelii (Sumatran orangutan), this protein is Rab GTPase-activating protein 1.